Consider the following 408-residue polypeptide: PCI domain-containing protein 2 (408 aa).

Ala-2 carries the N-acetylalanine modification. Residue Ser-45 is modified to Phosphoserine. The PCI domain occupies 210-400 (VTYRYYVGRK…QKLVVSKQNP (191 aa)).

The protein belongs to the CSN12 family. Component of the nuclear pore complex (NPC)-associated TREX-2 complex (transcription and export complex 2), composed of at least GANP, 2 copies of ENY2, PCID2, SEM1/DSS1, and either centrin CETN2 or centrin CETN3. The TREX-2 complex also associates with ALYREF/ALY and with the nucleoporin NUP153. Interacts with BRCA2. Interacts with SRCAP chromatin remodeling complex component ZNHIT1; the interaction results in inhibition of SRCAP complex activity, preventing the deposition of histone variant H2AZ1/H2A.Z to lymphoid fate regulator genes and restricting lymphoid lineage commitment.

It localises to the cytoplasm. It is found in the nucleus. The protein localises to the nuclear pore complex. Functionally, required for B-cell survival through the regulation of the expression of cell-cycle checkpoint MAD2L1 protein during B cell differentiation. As a component of the TREX-2 complex, involved in the export of mRNAs to the cytoplasm through the nuclear pores. Binds and stabilizes BRCA2 and is thus involved in the control of R-loop-associated DNA damage and transcription-associated genomic instability. Blocks the activity of the SRCAP chromatin remodeling complex by interacting with SRCAP complex member ZNHIT1 and inhibiting its interaction with the complex. This prevents the deposition of histone variant H2AZ1/H2A.Z at the nucleosomes of key lymphoid fate regulator genes which suppresses their expression and restricts lymphoid lineage commitment. In Bos taurus (Bovine), this protein is PCI domain-containing protein 2 (PCID2).